Reading from the N-terminus, the 380-residue chain is Cytochrome b (380 aa).

The next 4 helical transmembrane spans lie at 34 to 54 (FGSL…LLAM), 78 to 99 (WLIR…FLHI), 114 to 134 (WNTG…GYVL), and 179 to 199 (FFAL…THLM). 2 residues coordinate heme b: His-84 and His-98. Residues His-183 and His-197 each contribute to the heme b site. His-202 is an a ubiquinone binding site. 4 helical membrane-spanning segments follow: residues 227–247 (LKDI…ALFS), 289–309 (LGGV…PFLH), 321–341 (LSQA…WVGS), and 348–368 (FIII…SLLP).

Belongs to the cytochrome b family. In terms of assembly, the cytochrome bc1 complex contains 11 subunits: 3 respiratory subunits (MT-CYB, CYC1 and UQCRFS1), 2 core proteins (UQCRC1 and UQCRC2) and 6 low-molecular weight proteins (UQCRH/QCR6, UQCRB/QCR7, UQCRQ/QCR8, UQCR10/QCR9, UQCR11/QCR10 and a cleavage product of UQCRFS1). This cytochrome bc1 complex then forms a dimer. Heme b serves as cofactor.

It is found in the mitochondrion inner membrane. In terms of biological role, component of the ubiquinol-cytochrome c reductase complex (complex III or cytochrome b-c1 complex) that is part of the mitochondrial respiratory chain. The b-c1 complex mediates electron transfer from ubiquinol to cytochrome c. Contributes to the generation of a proton gradient across the mitochondrial membrane that is then used for ATP synthesis. This chain is Cytochrome b (MT-CYB), found in Crossoptilon crossoptilon (White-eared pheasant).